Consider the following 99-residue polypeptide: Transposase InsE for insertion sequence IS3A (99 aa).

The tract at residues 1-21 is disordered; it reads MTKTVSTSKKPRKQHSPEFRS.

The protein belongs to the transposase 8 family.

Involved in the transposition of the insertion sequence IS3. This is Transposase InsE for insertion sequence IS3A (insE1) from Escherichia coli (strain K12).